Consider the following 154-residue polypeptide: Pseudo histidine-containing phosphotransfer protein 6 (154 aa).

Met1 is subject to N-acetylmethionine. One can recognise an HPt domain in the interval 41-137; the sequence is SPNFVYDVIN…HYLKNMMHEL (97 aa).

In terms of assembly, interacts with AHK5.

It is found in the cytoplasm. The protein resides in the cytosol. Its subcellular location is the nucleus. In terms of biological role, functions as a two-component phosphorelay mediator between cytokinin sensor histidine kinases and response regulators (B-type ARRs). Plays an important role in propagating cytokinin signal transduction. The polypeptide is Pseudo histidine-containing phosphotransfer protein 6 (AHP6) (Arabidopsis thaliana (Mouse-ear cress)).